A 367-amino-acid chain; its full sequence is MDDAAVLKRRGYLLGINLGEGSYAKVKSAYSERLKFNVAIKIIDRKKAPADFLEKFLPREIEILAMLNHCSIIKTYEIFETSHGKVYIVMELAVQGDLLELIKTRGALHEDEARKKFHQLSLAIKYCHDLDVVHRDLKCDNLLLDKDFNIKLSDFSFSKRCLRDDSGRMALSKTFCGSPAYAAPEVLQGIPYQPKVYDIWSLGVILYIMVCGSMPYDDSNIKKMLRIQKEHRVNFPRSKHLTGECKDLIYHMLQPDVNRRLHIDEILSHCWMQPKARGSPSVAINKEGESSRGTEPLWTPEPGSDKKSATKLEPEGEAQPQAQPETKPEGTAMQMSRQSEILGFPSKPSTMETEEGPPQQPPETRAQ.

Positions 12 to 272 (YLLGINLGEG…IDEILSHCWM (261 aa)) constitute a Protein kinase domain. ATP contacts are provided by residues 18 to 26 (LGEGSYAKV) and Lys-41. Asp-136 serves as the catalytic Proton acceptor. Phosphothreonine is present on Thr-174. Residues 276–367 (ARGSPSVAIN…PQQPPETRAQ (92 aa)) form a disordered region. Residues 303–314 (GSDKKSATKLEP) are compositionally biased toward basic and acidic residues.

It belongs to the protein kinase superfamily. CAMK Ser/Thr protein kinase family. Interacts with TSSK2. Interacts with HSP90; this interaction stabilizes TSSK1. Requires Mg(2+) as cofactor. Post-translationally, autophosphorylated. Ubiquitinated; HSP90 activity negatively regulates ubiquitination and degradation. Testis-specific. Present in sperm (at protein level).

The protein localises to the cytoplasm. The protein resides in the cytoplasmic vesicle. It is found in the secretory vesicle. It localises to the acrosome. Its subcellular location is the cell projection. The protein localises to the cilium. The protein resides in the flagellum. The enzyme catalyses L-seryl-[protein] + ATP = O-phospho-L-seryl-[protein] + ADP + H(+). The catalysed reaction is L-threonyl-[protein] + ATP = O-phospho-L-threonyl-[protein] + ADP + H(+). Its activity is regulated as follows. Kinase activity is specifically inhibited by 2 classes of compounds: biphenyl compounds (1,1'-(biphenyl-4,4'-diyl)bis(2,2-dihydroxyethanone)) and 1,2,7-trialky-1H-imidazo[4,5-g]quinoxalin-6-one. Activated by phosphorylation on Thr-174 and potentially by autophosphorylation. Functionally, testis-specific serine/threonine-protein kinase required during spermatid development. Phosphorylates 'Ser-288' of TSKS. Involved in the late stages of spermatogenesis, during the reconstruction of the cytoplasm. During spermatogenesis, required for the transformation of a ring-shaped structure around the base of the flagellum originating from the chromatoid body. This Homo sapiens (Human) protein is Testis-specific serine/threonine-protein kinase 1 (TSSK1B).